We begin with the raw amino-acid sequence, 322 residues long: Epiphycan (322 aa).

The N-terminal stretch at 1 to 19 (MGMLARVALGLIIIDAVLA) is a signal peptide. The disordered stretch occupies residues 58–108 (KVSERLSGNRELLTPGPQLGDNQDEDKDEESTPRLIDGSSPQEPEFPGLLG). Residue S64 is glycosylated (O-linked (Xyl...) (dermatan sulfate) serine). S96 is a glycosylation site (O-linked (GalNAc...) serine). One can recognise an LRRNT domain in the interval 106–143 (LLGPHTNEDFPTCLLCTCISTTVYCDDHELDAIPPLPK). Cysteines 118 and 130 form a disulfide. LRR repeat units follow at residues 144–165 (KTTY…DFAS), 168–189 (DLKR…AFRK), 192–213 (HLQE…PNTL), 238–258 (DLHH…PLPE), and 259–280 (SLRA…TFCN). C279 and C312 are oxidised to a cystine. 2 N-linked (GlcNAc...) asparagine glycosylation sites follow: N283 and N302. Residues 290-310 (ALEDIRLDGNPINLSRTPQAY) form an LRR 6 repeat.

This sequence belongs to the small leucine-rich proteoglycan (SLRP) family. SLRP class III subfamily. The O-linked polysaccharide on Ser-96 is probably the mucin type linked to GalNAc. There is one glycosaminoglycan chain, known to be dermatan sulfate, and it is probably the O-glycosylation at Ser-64. Confined to the middle zone of embryonic epiphyseal cartilage consisting of flattened chondrocytes and the ossifying region in the limb buds of chick embryos. Has also been detected in testis.

It localises to the secreted. The protein resides in the extracellular space. It is found in the extracellular matrix. May have a role in bone formation and also in establishing the ordered structure of cartilage through matrix organization. The protein is Epiphycan (Epyc) of Mus musculus (Mouse).